The chain runs to 200 residues: Protein-methionine-sulfoxide reductase heme-binding subunit MsrQ (200 aa).

5 consecutive transmembrane segments (helical) span residues 8–28 (ITWL…WLFY), 54–74 (LLLA…PLLI), 79–99 (LLGL…SLLE), 116–136 (PYLT…LTSF), and 153–173 (FIYL…KILS).

It belongs to the MsrQ family. In terms of assembly, heterodimer of a catalytic subunit (MsrP) and a heme-binding subunit (MsrQ). FMN is required as a cofactor. Heme b serves as cofactor.

It is found in the cell inner membrane. Part of the MsrPQ system that repairs oxidized periplasmic proteins containing methionine sulfoxide residues (Met-O), using respiratory chain electrons. Thus protects these proteins from oxidative-stress damage caused by reactive species of oxygen and chlorine generated by the host defense mechanisms. MsrPQ is essential for the maintenance of envelope integrity under bleach stress, rescuing a wide series of structurally unrelated periplasmic proteins from methionine oxidation. MsrQ provides electrons for reduction to the reductase catalytic subunit MsrP, using the quinone pool of the respiratory chain. The protein is Protein-methionine-sulfoxide reductase heme-binding subunit MsrQ of Cronobacter sakazakii (strain ATCC BAA-894) (Enterobacter sakazakii).